Here is a 262-residue protein sequence, read N- to C-terminus: Acyl-[acyl-carrier-protein]--UDP-N-acetylglucosamine O-acyltransferase (262 aa).

It belongs to the transferase hexapeptide repeat family. LpxA subfamily. Homotrimer.

Its subcellular location is the cytoplasm. It carries out the reaction a (3R)-hydroxyacyl-[ACP] + UDP-N-acetyl-alpha-D-glucosamine = a UDP-3-O-[(3R)-3-hydroxyacyl]-N-acetyl-alpha-D-glucosamine + holo-[ACP]. Its pathway is glycolipid biosynthesis; lipid IV(A) biosynthesis; lipid IV(A) from (3R)-3-hydroxytetradecanoyl-[acyl-carrier-protein] and UDP-N-acetyl-alpha-D-glucosamine: step 1/6. In terms of biological role, involved in the biosynthesis of lipid A, a phosphorylated glycolipid that anchors the lipopolysaccharide to the outer membrane of the cell. This is Acyl-[acyl-carrier-protein]--UDP-N-acetylglucosamine O-acyltransferase from Yersinia enterocolitica serotype O:8 / biotype 1B (strain NCTC 13174 / 8081).